Here is a 200-residue protein sequence, read N- to C-terminus: 3-isopropylmalate dehydratase small subunit (200 aa).

This sequence belongs to the LeuD family. LeuD type 1 subfamily. Heterodimer of LeuC and LeuD.

It catalyses the reaction (2R,3S)-3-isopropylmalate = (2S)-2-isopropylmalate. It participates in amino-acid biosynthesis; L-leucine biosynthesis; L-leucine from 3-methyl-2-oxobutanoate: step 2/4. Catalyzes the isomerization between 2-isopropylmalate and 3-isopropylmalate, via the formation of 2-isopropylmaleate. The chain is 3-isopropylmalate dehydratase small subunit (leuD) from Synechocystis sp. (strain ATCC 27184 / PCC 6803 / Kazusa).